The chain runs to 522 residues: MEELQGYLEKDRSRQQPFXYPLLFQEYIYALAHDRGLKGSLFYEPTEVFGYDSKSSLALVKRLIIRIYQQNDFTSVVNDSNKNQFVNHHHNNFGYSHFYSQMISEGFAILVEIPFSLRLVSYFEKKEIPKSHNLRSIHSIFPFLEGKLXHLNYVSDILIPHPVHMEILIQILQCWIQDAPLLHFXRFFLHKXHNWBRFLXTPKESXYVFSKXNKRLFRFLYNSYVSECEFLLVFLRKKSSYLRLTSFGLFLERRHFYVKMEHLQMQHLILIVVCLDYXQGTLWSFXXXXXXXVRCQGXVVLASKGTHLLMKKWKYNFVNLWQYHFHFWYQSYRIHINQLSNYSLYFLGYLSSLLRNSSTVRNQMLENSFLIDTVTNKLETLVPVIFLIGSLSKAQFCTVSGHPISKPIWADLSDFEIIERFGRMCRNLSHYHSGSSKKQELHRIKYILRLSCARTLARKHKSTVRTFLRRLGSVLLEEFFTEEEQVLSLILPKAIPFTFYGSHKERIWHLDIIRINDLVNHS.

It belongs to the intron maturase 2 family. MatK subfamily.

It is found in the plastid. The protein localises to the chloroplast. In terms of biological role, usually encoded in the trnK tRNA gene intron. Probably assists in splicing its own and other chloroplast group II introns. This Iris danfordiae (Danford iris) protein is Maturase K.